The following is a 381-amino-acid chain: Cytochrome b (381 aa).

A run of 4 helical transmembrane segments spans residues 34-54 (FGSL…FLAM), 78-99 (WLIR…YFHI), 114-134 (WNIG…GYVL), and 179-199 (FFAF…IHVL). Heme b contacts are provided by H84 and H98. Residues H183 and H197 each coordinate heme b. H202 is a binding site for a ubiquinone. 4 consecutive transmembrane segments (helical) span residues 227 to 247 (YKDA…ALFL), 289 to 309 (LGGV…PFLH), 321 to 341 (LTQI…WIGG), and 348 to 368 (FILI…IALP).

It belongs to the cytochrome b family. As to quaternary structure, the cytochrome bc1 complex contains 3 respiratory subunits (MT-CYB, CYC1 and UQCRFS1), 2 core proteins (UQCRC1 and UQCRC2) and probably 6 low-molecular weight proteins. It depends on heme b as a cofactor.

The protein localises to the mitochondrion inner membrane. Functionally, component of the ubiquinol-cytochrome c reductase complex (complex III or cytochrome b-c1 complex) that is part of the mitochondrial respiratory chain. The b-c1 complex mediates electron transfer from ubiquinol to cytochrome c. Contributes to the generation of a proton gradient across the mitochondrial membrane that is then used for ATP synthesis. This Isurus oxyrinchus (Shortfin mako shark) protein is Cytochrome b (mt-cyb).